Consider the following 291-residue polypeptide: Nucleotide-binding protein PPA0813 (291 aa).

17–24 (GISGAGRR) is a binding site for ATP. 66–69 (DVRS) provides a ligand contact to GTP.

Belongs to the RapZ-like family.

In terms of biological role, displays ATPase and GTPase activities. This is Nucleotide-binding protein PPA0813 from Cutibacterium acnes (strain DSM 16379 / KPA171202) (Propionibacterium acnes).